The sequence spans 142 residues: Putative mating-type transcription factor (142 aa).

The protein localises to the nucleus. The polypeptide is Putative mating-type transcription factor (Eremothecium gossypii (strain ATCC 10895 / CBS 109.51 / FGSC 9923 / NRRL Y-1056) (Yeast)).